Here is a 217-residue protein sequence, read N- to C-terminus: UPF0111 protein MTH_1689 (217 aa).

The protein belongs to the UPF0111 family.

This chain is UPF0111 protein MTH_1689, found in Methanothermobacter thermautotrophicus (strain ATCC 29096 / DSM 1053 / JCM 10044 / NBRC 100330 / Delta H) (Methanobacterium thermoautotrophicum).